Reading from the N-terminus, the 206-residue chain is Charged multivesicular body protein 2a homolog 1 (206 aa).

Residues 1-32 are disordered; sequence MSFFGGNKKTPEQELKDSKRELSKGQREMDRE. Positions 9 to 32 are enriched in basic and acidic residues; sequence KTPEQELKDSKRELSKGQREMDRE. Coiled-coil stretches lie at residues 12–80 and 114–148; these read EQEL…RATK and NKQT…DMFE.

Belongs to the SNF7 family. As to quaternary structure, probable core component of the endosomal sorting required for transport complex III (ESCRT-III). ESCRT-III components are thought to multimerize to form a flat lattice on the perimeter membrane of the endosome.

Its subcellular location is the endosome membrane. In terms of biological role, probable core component of the endosomal sorting required for transport complex III (ESCRT-III) which is involved in multivesicular bodies (MVBs) formation and sorting of endosomal cargo proteins into MVBs. MVBs contain intraluminal vesicles (ILVs) that are generated by invagination and scission from the limiting membrane of the endosome and are delivered to lysosomes enabling degradation of membrane proteins. The polypeptide is Charged multivesicular body protein 2a homolog 1 (chmp2a1) (Dictyostelium discoideum (Social amoeba)).